The primary structure comprises 1340 residues: MLYSYTEKKRIRKDFGKRSQVLDVPYLLSIQLESFQKFIERDNEGQHGLEAAFRSVFPIQSYSGNAELQYVSYHLGEPVFDVKECQTRGLTFSAPLRVILRLIIRDATTETPIKEQEVYMGEIPLMTENGTFVINGTERVIVSQLHRSPGVFFDSDKGKIHSSGKVLFNARIIPYRGSWLDFEFDQKDHLFVRIDRRRKLPATIILRALQLSTNQILDTFFEKVIFHLNDEHIQMELVPERLRGETASFDIIANGTIYVNKGRRITARHIHQLKIDSIDRINVPREYLVGKIIAIDYIHDNTGEIIVPANIEITLEILDKLGKANFKRIETLFTNDLDHGAYISETLRIDSTRDRLSALVEIYRMMRPGEPPTREAAENLFENIFFSEDRYDLSAVGRMKFNRALLREEIEGSGLLSKSDIIEVMKKLIDIRNGKGEVDDIDHLGNRRVRSVGEMAENQFRIGLVRVERAVKERLSLSDLESLMPQDIINAKPISAAIKEFFGSSQLSQFMDQNNPLSEITHKRRISALGPGGLTRERAGFEVRDVHPTHYGRVCPIETPEGPNIGLINSLSVYAKTNEYGFLETPYRLVHNSVVTEEIHYLSAIEEGNFIIAQANTNLDDKGNFVEELVTCRHKGESGFFSREKVHYMDVSTQQIVSVGASLIPFLEHDDANRALMGANMQRQAVPTLRTDKPLVGTGMERIVAVDSGVTVVAKRGGIVQYVDASRIVINVHSDEMYSGEAGIDIYHMTKYIRSNQNTCISQKPCVTLGELVERGNVLADGPSTDLGELALGQNMRIAFMPWNGYNFEDSMLVSERVVQKDCFTTIHIQELACMSRDTKLGPEEITSDIPNVGEAALCKLDESGIVYIGAEVTSGDILVGKVTPKGETQLTPEEKLLRAIFGEKASDVKDSSLRVPNGYSGTVIDVQIFTRDGVKKDKRTLEIEEMQLQQAKKDLTEERRIFEAALFTRIRHVLGSDITNIDIVKILKLKREDWSQFNIKDNNKYCQLEQLAEQYYELNKVFANKLEEKRRKITQGDDLSPGVLKIVKVYIAVKRQIQPGDKMAGRHGNKGVISKINPIEDMPYDEKGIPVDIVLNPLGVPSRMNIGQILETHLGMAAKGIGDKINKMLKQHKNAEQLRQFIQKAYDIGDQVRQKVNLNLFSDQEILLLAENLKHGMPMATPVFDGAKEKEIKQMLQLAELPVSGQITLFDGRTGEPFERQVTVGYMYMLKLNHLVDDKMHARSTGSYSLVTQQPLGGKAQFGGQRFGEMEVWALEAYGAAYTLQEMLTVKSDDVNGRTKMYKNIVDCNHTMEPAMPESFNVLLKEIRSLGINIELEKN.

It belongs to the RNA polymerase beta chain family. As to quaternary structure, the RNAP catalytic core consists of 2 alpha, 1 beta, 1 beta' and 1 omega subunit. When a sigma factor is associated with the core the holoenzyme is formed, which can initiate transcription.

It catalyses the reaction RNA(n) + a ribonucleoside 5'-triphosphate = RNA(n+1) + diphosphate. Functionally, DNA-dependent RNA polymerase catalyzes the transcription of DNA into RNA using the four ribonucleoside triphosphates as substrates. The chain is DNA-directed RNA polymerase subunit beta from Baumannia cicadellinicola subsp. Homalodisca coagulata.